The chain runs to 335 residues: Probable cytosolic iron-sulfur protein assembly protein Ciao1 (335 aa).

WD repeat units lie at residues 12–51 (GHKG…WGTK), 57–96 (GHKR…FECN), 101–140 (GHEN…EFEC), 146–185 (PHTQ…NDWD), 192–231 (SHTS…NTAG), 250–289 (QHSR…KPDE), and 301–335 (AHDQ…KVSE).

The protein belongs to the WD repeat CIA1 family.

Essential component of the cytosolic iron-sulfur (Fe/S) protein assembly machinery. Required for the maturation of extramitochondrial Fe/S proteins. The polypeptide is Probable cytosolic iron-sulfur protein assembly protein Ciao1 (Drosophila sechellia (Fruit fly)).